The chain runs to 90 residues: MNIKPIGERVLLKPIKKEEKTKSGILLSSKSSNTDTKNEAEVVALGKGEKLEGIKVGDKVIFNKFSGNEIEDGDIKYLIVNADDILAVIE.

Belongs to the GroES chaperonin family. In terms of assembly, heptamer of 7 subunits arranged in a ring. Interacts with the chaperonin GroEL.

The protein localises to the cytoplasm. Together with the chaperonin GroEL, plays an essential role in assisting protein folding. The GroEL-GroES system forms a nano-cage that allows encapsulation of the non-native substrate proteins and provides a physical environment optimized to promote and accelerate protein folding. GroES binds to the apical surface of the GroEL ring, thereby capping the opening of the GroEL channel. This chain is Co-chaperonin GroES, found in Fusobacterium nucleatum subsp. polymorphum (Fusobacterium polymorphum).